The sequence spans 121 residues: Large ribosomal subunit protein uL14 (121 aa).

This sequence belongs to the universal ribosomal protein uL14 family. As to quaternary structure, part of the 50S ribosomal subunit. Forms a cluster with proteins L3 and L19. In the 70S ribosome, L14 and L19 interact and together make contacts with the 16S rRNA in bridges B5 and B8.

Binds to 23S rRNA. Forms part of two intersubunit bridges in the 70S ribosome. This Legionella pneumophila (strain Corby) protein is Large ribosomal subunit protein uL14.